The primary structure comprises 278 residues: Putative protein-disulfide oxidoreductase RF_0032 (278 aa).

The signal sequence occupies residues 1 to 18 (MRSIFIVPIFLLFLSSCS). The disordered stretch occupies residues 62-84 (VPANDNNQTDEVSTPPSQEQKNP). The segment covering 65-81 (NDNNQTDEVSTPPSQEQ) has biased composition (polar residues). Positions 77–266 (PSQEQKNPEI…ISTAVDKALE (190 aa)) constitute a Thioredoxin domain. Residues C119 and C122 are joined by a disulfide bond.

It belongs to the thioredoxin family. DsbA subfamily.

The protein resides in the periplasm. Its function is as follows. May be required for disulfide bond formation in some proteins. The protein is Putative protein-disulfide oxidoreductase RF_0032 of Rickettsia felis (strain ATCC VR-1525 / URRWXCal2) (Rickettsia azadi).